A 219-amino-acid polypeptide reads, in one-letter code: Probable nicotinate-nucleotide adenylyltransferase (219 aa).

Belongs to the NadD family.

The enzyme catalyses nicotinate beta-D-ribonucleotide + ATP + H(+) = deamido-NAD(+) + diphosphate. The protein operates within cofactor biosynthesis; NAD(+) biosynthesis; deamido-NAD(+) from nicotinate D-ribonucleotide: step 1/1. Catalyzes the reversible adenylation of nicotinate mononucleotide (NaMN) to nicotinic acid adenine dinucleotide (NaAD). The sequence is that of Probable nicotinate-nucleotide adenylyltransferase from Cronobacter sakazakii (strain ATCC BAA-894) (Enterobacter sakazakii).